A 67-amino-acid chain; its full sequence is Large ribosomal subunit protein uL29 (67 aa).

The protein belongs to the universal ribosomal protein uL29 family.

The sequence is that of Large ribosomal subunit protein uL29 from Staphylothermus marinus (strain ATCC 43588 / DSM 3639 / JCM 9404 / F1).